The sequence spans 240 residues: Cysteine-rich venom protein catrin (240 aa).

The N-terminal stretch at 1 to 19 (MIAFIVLPILAAVLQQSSG) is a signal peptide. The region spanning 38-166 (VDLHNFLRRS…KYSYFYVCQY (129 aa)) is the SCP domain. Disulfide bonds link Cys75-Cys153, Cys92-Cys167, Cys148-Cys164, Cys186-Cys193, Cys189-Cys198, Cys202-Cys235, Cys211-Cys229, and Cys220-Cys233. Positions 202 to 235 (CTKEDKYTNCKSLVQQAGCQDKQMQSDCPAICFC) constitute a ShKT domain.

It belongs to the CRISP family. As to expression, expressed by the venom gland.

The protein resides in the secreted. Functionally, catrin-2 weakly blocks contraction of smooth muscle elicited by high potassium-induced depolarization, but does not block caffeine-stimulated contraction. Catrin-1 has no significant effect. May target voltage-gated calcium channels on smooth muscle. The polypeptide is Cysteine-rich venom protein catrin (Crotalus atrox (Western diamondback rattlesnake)).